The primary structure comprises 199 residues: Histone deacetylase complex subunit SAP25 (199 aa).

Composition is skewed to polar residues over residues Gln151–Ala163 and Gln184–Pro199. The tract at residues Gln151 to Pro199 is disordered.

In terms of assembly, may be a component of the mSIN3A corepressor complex. Interacts with SIN3A. Interacts with HDAC2.

Its subcellular location is the nucleus. It localises to the cytoplasm. In terms of biological role, involved in the transcriptional repression mediated by the mSIN3A but not the N-CoR corepressor complex. This Homo sapiens (Human) protein is Histone deacetylase complex subunit SAP25 (SAP25).